The chain runs to 283 residues: Pantothenate synthetase (283 aa).

26–33 (MGNLHEGH) lines the ATP pocket. H33 (proton donor) is an active-site residue. Position 57 (Q57) interacts with (R)-pantoate. Q57 serves as a coordination point for beta-alanine. Position 144-147 (144-147 (GKKD)) interacts with ATP. Q150 serves as a coordination point for (R)-pantoate. ATP is bound by residues V173 and 181–184 (LSSR).

The protein belongs to the pantothenate synthetase family. Homodimer.

Its subcellular location is the cytoplasm. The catalysed reaction is (R)-pantoate + beta-alanine + ATP = (R)-pantothenate + AMP + diphosphate + H(+). It functions in the pathway cofactor biosynthesis; (R)-pantothenate biosynthesis; (R)-pantothenate from (R)-pantoate and beta-alanine: step 1/1. In terms of biological role, catalyzes the condensation of pantoate with beta-alanine in an ATP-dependent reaction via a pantoyl-adenylate intermediate. In Ralstonia pickettii (strain 12J), this protein is Pantothenate synthetase.